The primary structure comprises 164 residues: SsrA-binding protein (164 aa).

Positions 143 to 164 (HDKRQDEKQKSIKKEINSVLKR) are disordered. The span at 145-158 (KRQDEKQKSIKKEI) shows a compositional bias: basic and acidic residues.

This sequence belongs to the SmpB family.

The protein localises to the cytoplasm. Its function is as follows. Required for rescue of stalled ribosomes mediated by trans-translation. Binds to transfer-messenger RNA (tmRNA), required for stable association of tmRNA with ribosomes. tmRNA and SmpB together mimic tRNA shape, replacing the anticodon stem-loop with SmpB. tmRNA is encoded by the ssrA gene; the 2 termini fold to resemble tRNA(Ala) and it encodes a 'tag peptide', a short internal open reading frame. During trans-translation Ala-aminoacylated tmRNA acts like a tRNA, entering the A-site of stalled ribosomes, displacing the stalled mRNA. The ribosome then switches to translate the ORF on the tmRNA; the nascent peptide is terminated with the 'tag peptide' encoded by the tmRNA and targeted for degradation. The ribosome is freed to recommence translation, which seems to be the essential function of trans-translation. The sequence is that of SsrA-binding protein from Prochlorococcus marinus (strain MIT 9312).